The following is a 352-amino-acid chain: uncharacterized protein (352 aa).

The first 22 residues, 1–22, serve as a signal peptide directing secretion; the sequence is MIFKKTILIFIISFFFISISFA. The span at 25 to 47 shows a compositional bias: low complexity; it reads SSSSSSSSSSSSSSWSSSESSSS. The segment at 25–49 is disordered; sequence SSSSSSSSSSSSSSWSSSESSSSPA. Residues asparagine 76, asparagine 110, asparagine 182, asparagine 212, and asparagine 223 are each glycosylated (N-linked (GlcNAc...) asparagine).

It localises to the secreted. This is an uncharacterized protein from Dictyostelium discoideum (Social amoeba).